The primary structure comprises 716 residues: Iron-sulfur clusters transporter atm1, mitochondrial (716 aa).

A mitochondrion-targeting transit peptide spans 1–18 (MAPSIKLSTMATSLHRAH). Residues 19-123 (GTSALLRRPR…PKGSWGDKAR (105 aa)) are Mitochondrial matrix-facing. The tract at residues 57–87 (LFAPNGSAKDESKPAVSTVPKTTGRGPSDPL) is disordered. A helical transmembrane segment spans residues 124-145 (VLLAIGLLVGGKVLNVQVPFYF). Residues 124 to 414 (VLLAIGLLVG…LGSVYRELRQ (291 aa)) form the ABC transmembrane type-1 domain. Over 146–168 (REIVDSLNIDFSTTGGSVTAVAG) the chain is Mitochondrial intermembrane. A helical transmembrane segment spans residues 169 to 192 (AMILGYGAARVGAVVSQELRNAVF). The Mitochondrial matrix segment spans residues 193 to 241 (ASVAQKAIRKVARNTFEHLLNLDLSFHLSKQTGGLTRAIDRGTKGISFL). A helical membrane pass occupies residues 242–265 (LTSMVFHIVPTALEISMVCGILTY). A topological domain (mitochondrial intermembrane) is located at residue asparagine 266. The helical transmembrane segment at 267 to 287 (FGWQYAALTALTMVSYTAFTI) threads the bilayer. Over 288–353 (LTTAWRTKFR…NSIKVATSLA (66 aa)) the chain is Mitochondrial matrix. Glutathione-binding positions include 293 to 297 (RTKFR) and 356 to 359 (NSGQ). The helical transmembrane segment at 354–372 (FLNSGQNIIFSSALTVMMY) threads the bilayer. Over 373–387 (MGAHGVATGQLTVGD) the chain is Mitochondrial intermembrane. The chain crosses the membrane as a helical span at residues 388-409 (LVLINQLVFQLSVPLNFLGSVY). Glutathione is bound at residue glycine 406. At 410 to 716 (RELRQSLLDM…KEEVGEKKEA (307 aa)) the chain is on the mitochondrial matrix side. Residues 449–690 (IEFKDVTFGY…NGVYAQLWRA (242 aa)) enclose the ABC transporter domain. ATP contacts are provided by residues tyrosine 458 and 482–493 (GPSGCGKSTLLR). The tract at residues 697–716 (EEGEVSKKGEKEEVGEKKEA) is disordered. Residues 700-716 (EVSKKGEKEEVGEKKEA) show a composition bias toward basic and acidic residues.

Belongs to the ABC transporter superfamily. ABCB family. Heavy Metal importer (TC 3.A.1.210) subfamily. Homodimer.

Its subcellular location is the mitochondrion inner membrane. Its function is as follows. Performs an essential function in the generation of cytoplasmic iron-sulfur proteins by mediating the ATP-dependent export of Fe/S cluster precursors synthesized by egt-3 and other mitochondrial proteins. Hydrolyzes ATP. Binds glutathione and may function by transporting a glutathione-conjugated iron-sulfur compound. The protein is Iron-sulfur clusters transporter atm1, mitochondrial of Neurospora crassa (strain ATCC 24698 / 74-OR23-1A / CBS 708.71 / DSM 1257 / FGSC 987).